Here is a 519-residue protein sequence, read N- to C-terminus: NADH-ubiquinone oxidoreductase chain 4 (519 aa).

Transmembrane regions (helical) follow at residues 2–22, 68–88, 112–132, 146–166, 167–187, 196–216, 239–259, 270–290, 304–324, 333–353, 360–380, 399–419, 437–457, and 484–504; these read SGLL…ILSF, IAFI…ILFD, VDGL…IALI, LIII…LDVL, LFYI…GLFG, FYIF…ILTM, IFLF…VFLN, PLGG…YGIF, YTSI…FSTL, IAYS…SNII, ILLG…AGGV, VMPL…GAPL, LPLL…YTIY, and FFLL…PSFI.

This sequence belongs to the complex I subunit 4 family.

The protein resides in the mitochondrion membrane. The catalysed reaction is a ubiquinone + NADH + 5 H(+)(in) = a ubiquinol + NAD(+) + 4 H(+)(out). In terms of biological role, core subunit of the mitochondrial membrane respiratory chain NADH dehydrogenase (Complex I) that is believed to belong to the minimal assembly required for catalysis. Complex I functions in the transfer of electrons from NADH to the respiratory chain. The immediate electron acceptor for the enzyme is believed to be ubiquinone. The chain is NADH-ubiquinone oxidoreductase chain 4 (ND4) from Podospora anserina (strain S / ATCC MYA-4624 / DSM 980 / FGSC 10383) (Pleurage anserina).